The sequence spans 958 residues: Glycine dehydrogenase (decarboxylating) (958 aa).

Lys708 carries the N6-(pyridoxal phosphate)lysine modification.

The protein belongs to the GcvP family. In terms of assembly, the glycine cleavage system is composed of four proteins: P, T, L and H. Pyridoxal 5'-phosphate serves as cofactor.

It carries out the reaction N(6)-[(R)-lipoyl]-L-lysyl-[glycine-cleavage complex H protein] + glycine + H(+) = N(6)-[(R)-S(8)-aminomethyldihydrolipoyl]-L-lysyl-[glycine-cleavage complex H protein] + CO2. Functionally, the glycine cleavage system catalyzes the degradation of glycine. The P protein binds the alpha-amino group of glycine through its pyridoxal phosphate cofactor; CO(2) is released and the remaining methylamine moiety is then transferred to the lipoamide cofactor of the H protein. In Photorhabdus laumondii subsp. laumondii (strain DSM 15139 / CIP 105565 / TT01) (Photorhabdus luminescens subsp. laumondii), this protein is Glycine dehydrogenase (decarboxylating).